A 207-amino-acid chain; its full sequence is Guanylate kinase (207 aa).

In terms of domain architecture, Guanylate kinase-like spans 5 to 185 (GFVLLISGPS…SYEALRAILI (181 aa)). 12–19 (GPSGAGKS) contributes to the ATP binding site.

This sequence belongs to the guanylate kinase family.

It is found in the cytoplasm. It catalyses the reaction GMP + ATP = GDP + ADP. Essential for recycling GMP and indirectly, cGMP. This Campylobacter jejuni subsp. jejuni serotype O:2 (strain ATCC 700819 / NCTC 11168) protein is Guanylate kinase (gmk).